A 214-amino-acid chain; its full sequence is Urease accessory protein UreF (214 aa).

The interval 70–95 (AAAGEAGDAETDARTPSPAARAASRA) is disordered. Residues 83–95 (RTPSPAARAASRA) show a composition bias toward low complexity.

The protein belongs to the UreF family. In terms of assembly, ureD, UreF and UreG form a complex that acts as a GTP-hydrolysis-dependent molecular chaperone, activating the urease apoprotein by helping to assemble the nickel containing metallocenter of UreC. The UreE protein probably delivers the nickel.

It is found in the cytoplasm. Required for maturation of urease via the functional incorporation of the urease nickel metallocenter. The chain is Urease accessory protein UreF from Mycolicibacterium vanbaalenii (strain DSM 7251 / JCM 13017 / BCRC 16820 / KCTC 9966 / NRRL B-24157 / PYR-1) (Mycobacterium vanbaalenii).